Reading from the N-terminus, the 405-residue chain is Transposase from transposon Tn1545 (405 aa).

The Core-binding (CB) domain occupies 79–163; the sequence is GKKMTLCQLY…SLKASFYIAI (85 aa). The region spanning 186–392 is the Tyr recombinase domain; it reads VPKTVLTEEQ…TFDSAMAEMK (207 aa). Active-site residues include R225, K264, H343, R346, and H369. Y379 serves as the catalytic O-(3'-phospho-DNA)-tyrosine intermediate.

Belongs to the 'phage' integrase family.

The chain is Transposase from transposon Tn1545 (int) from Streptococcus agalactiae serotype V (strain ATCC BAA-611 / 2603 V/R).